The sequence spans 387 residues: Anhydro-N-acetylmuramic acid kinase (387 aa).

ATP is bound at residue 17 to 24; it reads GTSMDGVD.

The protein belongs to the anhydro-N-acetylmuramic acid kinase family.

It catalyses the reaction 1,6-anhydro-N-acetyl-beta-muramate + ATP + H2O = N-acetyl-D-muramate 6-phosphate + ADP + H(+). It functions in the pathway amino-sugar metabolism; 1,6-anhydro-N-acetylmuramate degradation. Its pathway is cell wall biogenesis; peptidoglycan recycling. Catalyzes the specific phosphorylation of 1,6-anhydro-N-acetylmuramic acid (anhMurNAc) with the simultaneous cleavage of the 1,6-anhydro ring, generating MurNAc-6-P. Is required for the utilization of anhMurNAc either imported from the medium or derived from its own cell wall murein, and thus plays a role in cell wall recycling. The polypeptide is Anhydro-N-acetylmuramic acid kinase (Burkholderia pseudomallei (strain 1710b)).